The following is a 396-amino-acid chain: Dual specificity mitogen-activated protein kinase kinase dSOR1 (396 aa).

A disordered region spans residues 25 to 44; sequence APTPPFKTPSGTDTHSLLGK. In terms of domain architecture, Protein kinase spans 87–364; that stretch reads LEKLGELGSG…LKTLLSHPWI (278 aa). ATP-binding positions include 93 to 101 and K116; that span reads LGSGNGGVV. D209 functions as the Proton acceptor in the catalytic mechanism. Phosphoserine; by RAF occurs at positions 237 and 241.

This sequence belongs to the protein kinase superfamily. STE Ser/Thr protein kinase family. MAP kinase kinase subfamily. In terms of assembly, interacts with Raf and ksr; Dsor1 binding to ksr probably promotes ksr and Raf dimerization and ksr-mediated Raf transactivation. Phosphorylation on Ser/Thr by MAP kinase kinase kinases regulates positively the kinase activity.

The catalysed reaction is L-seryl-[protein] + ATP = O-phospho-L-seryl-[protein] + ADP + H(+). It catalyses the reaction L-threonyl-[protein] + ATP = O-phospho-L-threonyl-[protein] + ADP + H(+). The enzyme catalyses L-tyrosyl-[protein] + ATP = O-phospho-L-tyrosyl-[protein] + ADP + H(+). Functionally, required downstream of Raf in the sevenless (sev), torso (tor), and Drosophila EGF receptor homolog (DER) signal transduction pathways. Involved in both positive regulation (at the posterior terminus) and negative regulation (at the anterior domain) of tll, as in other terminal class gene products, maybe via the ERK-A kinase. The polypeptide is Dual specificity mitogen-activated protein kinase kinase dSOR1 (Dsor1) (Drosophila melanogaster (Fruit fly)).